A 428-amino-acid chain; its full sequence is Isocitrate lyase 1 (428 aa).

91–93 serves as a coordination point for substrate; the sequence is SGW. Residue Asp-153 participates in Mg(2+) binding. The active-site Proton acceptor is the Cys-191. Substrate is bound by residues 192–193, Arg-228, 313–317, and Thr-347; these read GH and NCSPS.

This sequence belongs to the isocitrate lyase/PEP mutase superfamily. Isocitrate lyase family. In terms of assembly, homotetramer. The cofactor is Mg(2+).

It catalyses the reaction D-threo-isocitrate = glyoxylate + succinate. It carries out the reaction (2S,3R)-3-hydroxybutane-1,2,3-tricarboxylate = pyruvate + succinate. It participates in carbohydrate metabolism; glyoxylate cycle; (S)-malate from isocitrate: step 1/2. Its function is as follows. Involved in the persistence and virulence of M.tuberculosis. Catalyzes the reversible formation of succinate and glyoxylate from isocitrate, a key step of the glyoxylate cycle, which operates as an anaplerotic route for replenishing the tricarboxylic acid cycle during growth on fatty acid substrates. It also catalyzes the formation of pyruvate and succinate from 2-methylisocitrate, a key step in the methylcitrate cycle (propionate degradation route). This Mycobacterium tuberculosis (strain ATCC 35801 / TMC 107 / Erdman) protein is Isocitrate lyase 1 (icl1).